The following is a 474-amino-acid chain: Synaptotagmin-17 (474 aa).

The segment at 60–117 is disordered; the sequence is WLMASRSNDKDGDSVHTASDVPLTPRTNSPDGRRSSSDTSKSTYSLTRRISSLDSRRP. Over residues 96-117 the composition is skewed to low complexity; the sequence is SDTSKSTYSLTRRISSLDSRRP. A phosphoserine mark is found at Ser118 and Ser119. C2 domains are found at residues 184–310 and 321–455; these read QLGM…HWWK and ELGE…EQWH.

It belongs to the synaptotagmin family. Expressed in brain and kidney.

The protein localises to the membrane. Plays a role in dendrite formation by melanocytes. The sequence is that of Synaptotagmin-17 (Syt17) from Rattus norvegicus (Rat).